A 157-amino-acid polypeptide reads, in one-letter code: Phosphopantetheine adenylyltransferase (157 aa).

Ser8 contacts substrate. Residues 8-9 (SF) and His16 each bind ATP. Substrate-binding residues include Lys40, Thr72, and Arg86. Residues 87-89 (GLR), Glu97, and 122-128 (HSFLSSS) each bind ATP.

This sequence belongs to the bacterial CoaD family. In terms of assembly, homohexamer. The cofactor is Mg(2+).

Its subcellular location is the cytoplasm. The catalysed reaction is (R)-4'-phosphopantetheine + ATP + H(+) = 3'-dephospho-CoA + diphosphate. Its pathway is cofactor biosynthesis; coenzyme A biosynthesis; CoA from (R)-pantothenate: step 4/5. In terms of biological role, reversibly transfers an adenylyl group from ATP to 4'-phosphopantetheine, yielding dephospho-CoA (dPCoA) and pyrophosphate. This is Phosphopantetheine adenylyltransferase from Prochlorococcus marinus (strain MIT 9313).